The following is a 473-amino-acid chain: Venom prothrombin activator vestarin-D1 (473 aa).

Positions 1-20 (MAPQLLLCLIQTFLWSLPEA) are cleaved as a signal peptide. Residues 21–40 (ESNVFLKSNVANRFLQRTKR) constitute a propeptide that is removed on maturation. The Gla domain maps to 41–86 (ANSGFEEIYPANFERECVEERCSKEEAREVFEDDEKTEAFWTVYVD). Glu-46, Glu-47, Glu-54, Glu-56, Glu-59, Glu-60, Glu-65, Glu-66, Glu-69, Glu-72, and Glu-75 each carry 4-carboxyglutamate. The cysteines at positions 57 and 62 are disulfide-linked. The region spanning 86 to 122 (DGDQCLSNPCHYGGTCKDGIGSYTCTCLAGYEGKNCE) is the EGF-like 1; calcium-binding domain. Intrachain disulfides connect Cys-90–Cys-101, Cys-95–Cys-110, Cys-112–Cys-121, Cys-129–Cys-140, Cys-136–Cys-149, Cys-151–Cys-164, Cys-172–Cys-335, Cys-235–Cys-240, Cys-383–Cys-397, and Cys-408–Cys-436. A glycan (O-linked (Hex...) serine) is linked at Ser-92. Positions 129–164 (CRVDNGNCWHFCKPVQNDTQCSCAEGYRLGDNGFSC) constitute an EGF-like 2 domain. Residues 182-228 (REASLPDFQTDFSDDYDAIDENNLIETVQSQSATLLKKSDNPNPDIR) constitute a propeptide, activation peptide. The 232-residue stretch at 229–460 (IVNGLDCKLG…FLPWIKTIMR (232 aa)) folds into the Peptidase S1 domain. Catalysis depends on His-270, which acts as the Charge relay system. N-linked (GlcNAc...) asparagine glycosylation occurs at Asn-273. Asp-315 serves as the catalytic Charge relay system. Ser-412 (charge relay system) is an active-site residue.

It belongs to the peptidase S1 family. Snake venom subfamily. Heterodimer of a light chain and a heavy chain; disulfide-linked. In terms of processing, the vitamin K-dependent, enzymatic carboxylation of some glutamate residues allows the modified protein to bind calcium. As to expression, expressed by the venom gland.

Its subcellular location is the secreted. It catalyses the reaction Selective cleavage of Arg-|-Thr and then Arg-|-Ile bonds in prothrombin to form thrombin.. Functionally, snake prothrombin activator that attacks the hemostatic system of prey. This protein is functionally similar to blood coagulation factor Xa. The chain is Venom prothrombin activator vestarin-D1 from Demansia vestigiata (Lesser black whip snake).